The following is a 67-amino-acid chain: ATP synthase protein 8 (67 aa).

Residues 8 to 24 (TWFITILATILTLFIIM) traverse the membrane as a helical segment. Lys-54 is modified (N6-acetyllysine; alternate). An N6-succinyllysine; alternate modification is found at Lys-54. Lys-57 is modified (N6-acetyllysine).

This sequence belongs to the ATPase protein 8 family. F-type ATPases have 2 components, CF(1) - the catalytic core - and CF(0) - the membrane proton channel. Component of an ATP synthase complex composed of ATP5PB, ATP5MC1, ATP5F1E, ATP5PD, ATP5ME, ATP5PF, ATP5MF, MT-ATP6, MT-ATP8, ATP5F1A, ATP5F1B, ATP5F1D, ATP5F1C, ATP5PO, ATP5MG, ATP5MK and ATP5MJ. Interacts with PRICKLE3.

Its subcellular location is the mitochondrion membrane. Functionally, mitochondrial membrane ATP synthase (F(1)F(0) ATP synthase or Complex V) produces ATP from ADP in the presence of a proton gradient across the membrane which is generated by electron transport complexes of the respiratory chain. F-type ATPases consist of two structural domains, F(1) - containing the extramembraneous catalytic core and F(0) - containing the membrane proton channel, linked together by a central stalk and a peripheral stalk. During catalysis, ATP synthesis in the catalytic domain of F(1) is coupled via a rotary mechanism of the central stalk subunits to proton translocation. Part of the complex F(0) domain. Minor subunit located with subunit a in the membrane. This chain is ATP synthase protein 8 (MT-ATP8), found in Artibeus jamaicensis (Jamaican fruit-eating bat).